The following is a 429-amino-acid chain: Adenylosuccinate synthetase (429 aa).

GTP is bound by residues G12 to K18 and G40 to T42. The Proton acceptor role is filled by D13. Residues D13 and G40 each contribute to the Mg(2+) site. Residues D13–K16, N38–H41, T129, R143, Q223, T238, and R302 contribute to the IMP site. H41 acts as the Proton donor in catalysis. T298–R304 lines the substrate pocket. GTP is bound by residues R304, K330–D332, and S412–S414.

Belongs to the adenylosuccinate synthetase family. Homodimer. Mg(2+) is required as a cofactor.

The protein resides in the cytoplasm. The catalysed reaction is IMP + L-aspartate + GTP = N(6)-(1,2-dicarboxyethyl)-AMP + GDP + phosphate + 2 H(+). It functions in the pathway purine metabolism; AMP biosynthesis via de novo pathway; AMP from IMP: step 1/2. Its function is as follows. Plays an important role in the de novo pathway of purine nucleotide biosynthesis. Catalyzes the first committed step in the biosynthesis of AMP from IMP. In Zymomonas mobilis subsp. mobilis (strain ATCC 31821 / ZM4 / CP4), this protein is Adenylosuccinate synthetase.